We begin with the raw amino-acid sequence, 420 residues long: MRQVVRFSLLFLPCAILSVVLIGAGVLRWALWGMSFGIDFQSGLIERLRIAPPAFSLVYTGTQSMQFFQDEQKVVFTVSSPGVLGERYEFLYTEYPTLRAFSEGAKKVEHLSVTLHAPETVYMRDTFSGAEGSTLSSASCFVHYFSEDVRAPGVEELRRVLKDVPSAVVQQVGVRAEHTFQVRVAAETAFPSSLLPEQGGTALAQSDAPDLVTPQGAVESVVYAALVRAYGADHVVRLAMDFVGSRFSHLLVRQALLLVLGALVLIFLYVALRFRWFFALGAIVALVHDACIMVSFMVWFGLEFNSASIAAILTIIGYSINDTVVVFDRVRQTILLDPIASVTTVLDRSQTDMLTRTVVTTVTTLLAALMLYVFTEGGSRDFSLALMVGMVSGVYSTIYIAGGCIALISRGKSGGQLLGL.

6 helical membrane-spanning segments follow: residues 7–27, 250–270, 276–296, 309–327, 358–378, and 388–408; these read FSLL…AGVL, LLVR…FLYV, WFFA…MVSF, IAAI…VVVF, VVTT…TEGG, and VGMV…IALI.

Belongs to the SecD/SecF family. SecF subfamily. Forms a complex with SecD. Part of the essential Sec protein translocation apparatus which comprises SecA, SecYEG and auxiliary proteins SecDF. Other proteins may also be involved.

It is found in the cell inner membrane. Functionally, part of the Sec protein translocase complex. Interacts with the SecYEG preprotein conducting channel. SecDF uses the proton motive force (PMF) to complete protein translocation after the ATP-dependent function of SecA. The polypeptide is Protein translocase subunit SecF (Treponema pallidum (strain Nichols)).